A 183-amino-acid polypeptide reads, in one-letter code: Ribosome rescue factor SmrB (183 aa).

In terms of domain architecture, Smr spans 98 to 173 (LDLHGLTQMQ…GDAALLVLIE (76 aa)).

It belongs to the SmrB family. Associates with collided ribosomes, but not with correctly translating polysomes.

In terms of biological role, acts as a ribosome collision sensor. Detects stalled/collided disomes (pairs of ribosomes where the leading ribosome is stalled and a second ribosome has collided with it) and endonucleolytically cleaves mRNA at the 5' boundary of the stalled ribosome. Stalled/collided disomes form a new interface (primarily via the 30S subunits) that binds SmrB. Cleaved mRNA becomes available for tmRNA ligation, leading to ribosomal subunit dissociation and rescue of stalled ribosomes. In Enterobacter sp. (strain 638), this protein is Ribosome rescue factor SmrB.